We begin with the raw amino-acid sequence, 247 residues long: ATP synthase subunit a, chloroplastic (247 aa).

A run of 5 helical transmembrane segments spans residues 38-58 (QVLITSWVVITILLGSVIIAV), 95-115 (VPFIGTMFLFIFVSNWSGALL), 134-154 (INTTVALALLTSAAYFYAGLS), 199-219 (LVVVVLVSLVPLVVPIPVMFL), and 220-240 (GLFTSGIQALIFATLAAAYIG).

The protein belongs to the ATPase A chain family. F-type ATPases have 2 components, CF(1) - the catalytic core - and CF(0) - the membrane proton channel. CF(1) has five subunits: alpha(3), beta(3), gamma(1), delta(1), epsilon(1). CF(0) has four main subunits: a, b, b' and c.

The protein localises to the plastid. It localises to the chloroplast thylakoid membrane. Key component of the proton channel; it plays a direct role in the translocation of protons across the membrane. This chain is ATP synthase subunit a, chloroplastic, found in Zea mays (Maize).